Here is a 133-residue protein sequence, read N- to C-terminus: Ribosome-binding factor A (133 aa).

This sequence belongs to the RbfA family. Monomer. Binds 30S ribosomal subunits, but not 50S ribosomal subunits or 70S ribosomes.

It is found in the cytoplasm. One of several proteins that assist in the late maturation steps of the functional core of the 30S ribosomal subunit. Associates with free 30S ribosomal subunits (but not with 30S subunits that are part of 70S ribosomes or polysomes). Required for efficient processing of 16S rRNA. May interact with the 5'-terminal helix region of 16S rRNA. In Pseudomonas fluorescens (strain ATCC BAA-477 / NRRL B-23932 / Pf-5), this protein is Ribosome-binding factor A.